The primary structure comprises 764 residues: 5-methyltetrahydropteroyltriglutamate--homocysteine methyltransferase (764 aa).

5-methyltetrahydropteroyltri-L-glutamate is bound by residues 16–19 (RELK) and Lys-121. L-homocysteine is bound by residues 440–442 (IGS) and Glu-493. Residues 440–442 (IGS) and Glu-493 each bind L-methionine. 5-methyltetrahydropteroyltri-L-glutamate is bound by residues 524–525 (RC) and Trp-570. L-homocysteine is bound at residue Asp-608. Asp-608 is an L-methionine binding site. A 5-methyltetrahydropteroyltri-L-glutamate-binding site is contributed by Glu-614. The Zn(2+) site is built by His-650, Cys-652, and Glu-674. Residue His-703 is the Proton donor of the active site. Cys-735 provides a ligand contact to Zn(2+).

This sequence belongs to the vitamin-B12 independent methionine synthase family. The cofactor is Zn(2+).

The enzyme catalyses 5-methyltetrahydropteroyltri-L-glutamate + L-homocysteine = tetrahydropteroyltri-L-glutamate + L-methionine. The protein operates within amino-acid biosynthesis; L-methionine biosynthesis via de novo pathway; L-methionine from L-homocysteine (MetE route): step 1/1. Functionally, catalyzes the transfer of a methyl group from 5-methyltetrahydrofolate to homocysteine resulting in methionine formation. This is 5-methyltetrahydropteroyltriglutamate--homocysteine methyltransferase from Burkholderia ambifaria (strain MC40-6).